The chain runs to 593 residues: High affinity cGMP-specific 3',5'-cyclic phosphodiesterase 9A (593 aa).

Residues 87 to 142 (SAGVEDKRTTSRGQSAERPLRDRRVVGLEQPRREGAFESGQVEPRPREPQGCCQEG) are disordered. Positions 104-122 (RPLRDRRVVGLEQPRREGA) are enriched in basic and acidic residues. Residues 236–557 (PRRDVPTYPK…DRYEELKRID (322 aa)) form the PDEase domain. H312 serves as the catalytic Proton donor. 312–316 (HNFRH) contributes to the 3',5'-cyclic GMP binding site. 3 residues coordinate Zn(2+): H316, H352, and D353. D353 contacts 3',5'-cyclic GMP. D353 provides a ligand contact to Mg(2+). The residue at position 379 (S379) is a Phosphoserine. Residues D462, Y484, and 512-513 (AQ) contribute to the 3',5'-cyclic GMP site. A Zn(2+)-binding site is contributed by D462. Residues 564–593 (QKKTDSLTSGATEKSRERSRDVKNSEGDCA) are disordered. Positions 576 to 593 (EKSRERSRDVKNSEGDCA) are enriched in basic and acidic residues.

This sequence belongs to the cyclic nucleotide phosphodiesterase family. PDE9 subfamily. As to quaternary structure, homodimer. The cofactor is Zn(2+). Requires Mg(2+) as cofactor.

The protein resides in the cell projection. It is found in the ruffle membrane. The protein localises to the cytoplasm. It localises to the perinuclear region. Its subcellular location is the golgi apparatus. The protein resides in the endoplasmic reticulum. It is found in the cell membrane. The protein localises to the sarcolemma. The enzyme catalyses 3',5'-cyclic GMP + H2O = GMP + H(+). The protein operates within purine metabolism; 3',5'-cyclic GMP degradation; GMP from 3',5'-cyclic GMP: step 1/1. With respect to regulation, specifically inhibited by a compound named 3r ((R)-2-((1-cyclopentyl-4-hydroxy-1H-pyrazolo[3,4-d]pyrimidin-6- yl)amino)-N-(4-methoxyphenyl)propanamide); the inhibitor forms a hydrogen bond with Tyr-484, Ala-512 and Gln-513. Its function is as follows. Specifically hydrolyzes the second messenger cGMP, which is a key regulator of many important physiological processes. Highly specific: compared to other members of the cyclic nucleotide phosphodiesterase family, has the highest affinity and selectivity for cGMP. Specifically regulates natriuretic-peptide-dependent cGMP signaling in heart, acting as a regulator of cardiac hypertrophy in myocytes and muscle. Does not regulate nitric oxide-dependent cGMP in heart. Additional experiments are required to confirm whether its ability to hydrolyze natriuretic-peptide-dependent cGMP is specific to heart or is a general feature of the protein. In brain, involved in cognitive function, such as learning and long-term memory. This Pan troglodytes (Chimpanzee) protein is High affinity cGMP-specific 3',5'-cyclic phosphodiesterase 9A (PDE9A).